We begin with the raw amino-acid sequence, 492 residues long: Fumarate hydratase 1, mitochondrial (492 aa).

Residues 1-28 (MSIYVASRRLSGGTTVTALRYATSLRSY) constitute a mitochondrion transit peptide. Residues 127-129 (SGT), 157-160 (HPND), 167-169 (SSN), and Thr215 each bind substrate. The Proton donor/acceptor role is filled by His216. Ser346 is an active-site residue. Residues Ser347 and 352 to 354 (KVN) contribute to the substrate site.

The protein belongs to the class-II fumarase/aspartase family. Fumarase subfamily. Homotetramer.

The protein localises to the mitochondrion. It carries out the reaction (S)-malate = fumarate + H2O. Its pathway is carbohydrate metabolism; tricarboxylic acid cycle; (S)-malate from fumarate: step 1/1. With respect to regulation, fumarate hydratase activity (fumarate to L-malate) is strongly inhibited by phosphoenolpyruvate, citrate, oxaloacetate, ATP and ADP. Malate dehydratase activity (malate to fumarate) is activated by oxaloacetate, pyruvate, Asn and Gln. Malate dehydratase activity (malate to fumarate) is inhibited by citrate, succinate, ADP, ATP, glucose-6P and phosphoenolpyruvate. Its function is as follows. Catalyzes the reversible stereospecific interconversion of fumarate to L-malate. Catalyzes the hydration of fumarate to L-malate in the tricarboxylic acid (TCA) cycle to facilitate a transition step in the production of energy in the form of NADH. This chain is Fumarate hydratase 1, mitochondrial, found in Arabidopsis thaliana (Mouse-ear cress).